The sequence spans 385 residues: Succinate--CoA ligase [ADP-forming] subunit beta (385 aa).

In terms of domain architecture, ATP-grasp spans 9–243 (KEILSAYGIP…YSQLDTLEIN (235 aa)). Residues lysine 45, 52-54 (GRG), glutamate 98, valine 101, and glutamate 106 each bind ATP. Residues asparagine 198 and aspartate 212 each coordinate Mg(2+). Substrate is bound by residues asparagine 263 and 320-322 (GIM).

Belongs to the succinate/malate CoA ligase beta subunit family. In terms of assembly, heterotetramer of two alpha and two beta subunits. Mg(2+) serves as cofactor.

The catalysed reaction is succinate + ATP + CoA = succinyl-CoA + ADP + phosphate. It carries out the reaction GTP + succinate + CoA = succinyl-CoA + GDP + phosphate. It functions in the pathway carbohydrate metabolism; tricarboxylic acid cycle; succinate from succinyl-CoA (ligase route): step 1/1. Functionally, succinyl-CoA synthetase functions in the citric acid cycle (TCA), coupling the hydrolysis of succinyl-CoA to the synthesis of either ATP or GTP and thus represents the only step of substrate-level phosphorylation in the TCA. The beta subunit provides nucleotide specificity of the enzyme and binds the substrate succinate, while the binding sites for coenzyme A and phosphate are found in the alpha subunit. The polypeptide is Succinate--CoA ligase [ADP-forming] subunit beta (Geobacter sulfurreducens (strain ATCC 51573 / DSM 12127 / PCA)).